The chain runs to 439 residues: Dihydroorotate dehydrogenase (quinone), mitochondrial (439 aa).

A mitochondrion-targeting transit peptide spans 1–22 (MMHRVGFNVIGRRSFFTVNARR). The chain crosses the membrane as a helical span at residues 37 to 53 (LTALLLAGSAGYLYFMN). FMN-binding positions include 119–123 (AGLDK) and S143. K123 is a binding site for substrate. 168-172 (NRYGF) contacts substrate. The FMN site is built by N215 and N245. Substrate is bound at residue 245 to 250 (NVSSPN). S248 (nucleophile) is an active-site residue. FMN is bound by residues K296 and S324. 325–326 (NT) contributes to the substrate binding site. FMN contacts are provided by residues G350, G380, and 401 to 402 (YT).

Belongs to the dihydroorotate dehydrogenase family. Type 2 subfamily. It depends on FMN as a cofactor.

The protein localises to the mitochondrion inner membrane. It carries out the reaction (S)-dihydroorotate + a quinone = orotate + a quinol. Its pathway is pyrimidine metabolism; UMP biosynthesis via de novo pathway; orotate from (S)-dihydroorotate (quinone route): step 1/1. In terms of biological role, catalyzes the conversion of dihydroorotate to orotate with quinone as electron acceptor. The sequence is that of Dihydroorotate dehydrogenase (quinone), mitochondrial (URA9) from Candida glabrata (strain ATCC 2001 / BCRC 20586 / JCM 3761 / NBRC 0622 / NRRL Y-65 / CBS 138) (Yeast).